Reading from the N-terminus, the 142-residue chain is Galactose-binding lectin l-1 (142 aa).

The Galectin domain occupies 3–134 (FVEVKNLIMK…DATVKNISVN (132 aa)). 68 to 74 (WQEEQRD) contributes to the a beta-D-galactoside binding site. An N-linked (GlcNAc...) asparagine glycan is attached at N130.

Homodimer. The N-terminus is blocked. Skin; highest expression in that of individuals showing resistance to infectious disease.

It is found in the secreted. Its function is as follows. Involved in host defense at the body surface. Causes agglutination of the Gram-positive bacterium S.difficile. Possesses calcium-independent hemagglutinating activity. The chain is Galactose-binding lectin l-1 from Anguilla japonica (Japanese eel).